A 190-amino-acid polypeptide reads, in one-letter code: Imidazoleglycerol-phosphate dehydratase (190 aa).

Belongs to the imidazoleglycerol-phosphate dehydratase family.

It is found in the cytoplasm. The enzyme catalyses D-erythro-1-(imidazol-4-yl)glycerol 3-phosphate = 3-(imidazol-4-yl)-2-oxopropyl phosphate + H2O. Its pathway is amino-acid biosynthesis; L-histidine biosynthesis; L-histidine from 5-phospho-alpha-D-ribose 1-diphosphate: step 6/9. The protein is Imidazoleglycerol-phosphate dehydratase of Methanococcus maripaludis (strain C7 / ATCC BAA-1331).